A 201-amino-acid polypeptide reads, in one-letter code: MAIILPELPYAYDALEPQFDAETMTLHHDKHHATYVANANAALEKHPEIGENLEELLADVTKIPEDIRQALINNGGGHLNHALFWELLSPEKQDITPDVAQAIDDAFGSFDAFKEQFTAAATGRFGSGWAWLVVNKEGQLEITSTANQDTPISEGKKPILALDVWEHAYYLNYRNVRPNYIKAFFEIINWKKVSELYQAAK.

4 residues coordinate Mn(2+): histidine 27, histidine 81, aspartate 163, and histidine 167.

The protein belongs to the iron/manganese superoxide dismutase family. In terms of assembly, homodimer. Requires Mn(2+) as cofactor.

It localises to the secreted. The enzyme catalyses 2 superoxide + 2 H(+) = H2O2 + O2. Its function is as follows. Destroys superoxide anion radicals which are normally produced within the cells and which are toxic to biological systems. This chain is Superoxide dismutase [Mn] (sodA), found in Streptococcus pyogenes serotype M6 (strain ATCC BAA-946 / MGAS10394).